Consider the following 89-residue polypeptide: Protein WFDC9 (89 aa).

The signal sequence occupies residues 1-23 (MKPWILLLVMFISGVVMLLPVLG).

It localises to the secreted. The sequence is that of Protein WFDC9 (WFDC9) from Homo sapiens (Human).